We begin with the raw amino-acid sequence, 123 residues long: uncharacterized protein (123 aa).

Polar residues predominate over residues 1–12; that stretch reads MALNNVSLSSGD. 2 disordered regions span residues 1 to 25 and 53 to 91; these read MALN…SHGD and PRQA…RFSP. The span at 61–82 shows a compositional bias: basic and acidic residues; the sequence is VRAESRRVDGGGRSPREPDGRG.

This is an uncharacterized protein from Homo sapiens (Human).